A 259-amino-acid polypeptide reads, in one-letter code: Pyrroloquinoline-quinone synthase (259 aa).

The protein belongs to the PqqC family.

It carries out the reaction 6-(2-amino-2-carboxyethyl)-7,8-dioxo-1,2,3,4,7,8-hexahydroquinoline-2,4-dicarboxylate + 3 O2 = pyrroloquinoline quinone + 2 H2O2 + 2 H2O + H(+). It functions in the pathway cofactor biosynthesis; pyrroloquinoline quinone biosynthesis. Functionally, ring cyclization and eight-electron oxidation of 3a-(2-amino-2-carboxyethyl)-4,5-dioxo-4,5,6,7,8,9-hexahydroquinoline-7,9-dicarboxylic-acid to PQQ. The sequence is that of Pyrroloquinoline-quinone synthase from Bradyrhizobium diazoefficiens (strain JCM 10833 / BCRC 13528 / IAM 13628 / NBRC 14792 / USDA 110).